The following is a 54-amino-acid chain: Lectin alpha-1 chain (54 aa).

The protein belongs to the leguminous lectin family. Tetramer of two alpha and two beta chains.

This chain is Lectin alpha-1 chain, found in Lathyrus hirsutus (Rough pea).